The sequence spans 760 residues: Catecholate siderophore receptor Fiu (760 aa).

The first 31 residues, 1–31, serve as a signal peptide directing secretion; it reads MENNRNFPARQFHSLTFFAGLCIGITPVAQA. A TBDR plug domain is found at 67–175; it reads PVADTTRTMT…PTGSINMISK (109 aa). Residues 180-760 form the TBDR beta-barrel domain; the sequence is DSGIDASASI…TFLLTANMHF (581 aa). The short motif at 743–760 is the TonB C-terminal box element; the sequence is RYHPGEPRTFLLTANMHF.

It belongs to the TonB-dependent receptor family.

Its subcellular location is the cell outer membrane. In terms of biological role, involved in the active transport across the outer membrane of iron complexed with catecholate siderophores such as dihydroxybenzoylserine and dihydroxybenzoate. It derives its energy for transport by interacting with the trans-periplasmic membrane protein TonB. Can also transport catechol-substituted cephalosporins. Receptor for microcins M, H47 and E492. The chain is Catecholate siderophore receptor Fiu (fiu) from Escherichia coli O6:H1 (strain CFT073 / ATCC 700928 / UPEC).